We begin with the raw amino-acid sequence, 138 residues long: Large ribosomal subunit protein uL16c (138 aa).

The protein belongs to the universal ribosomal protein uL16 family. Part of the 50S ribosomal subunit.

The protein resides in the plastid. The protein localises to the chloroplast. This is Large ribosomal subunit protein uL16c from Phaeodactylum tricornutum (strain CCAP 1055/1).